The following is a 286-amino-acid chain: Undecaprenyl-diphosphatase (286 aa).

7 helical membrane passes run 50-70 (GAAF…VYFW), 97-117 (MGWL…IFQD), 126-146 (LWIV…ADAV), 156-176 (LTYK…IPGV), 200-220 (SFLL…YKVM), 236-256 (LATL…LKFV), and 264-284 (FVWY…FNVI).

The protein belongs to the UppP family.

Its subcellular location is the cell membrane. It carries out the reaction di-trans,octa-cis-undecaprenyl diphosphate + H2O = di-trans,octa-cis-undecaprenyl phosphate + phosphate + H(+). Its function is as follows. Catalyzes the dephosphorylation of undecaprenyl diphosphate (UPP). Confers resistance to bacitracin. The protein is Undecaprenyl-diphosphatase of Arthrobacter sp. (strain FB24).